Consider the following 383-residue polypeptide: Acetylornithine deacetylase (383 aa).

Histidine 80 provides a ligand contact to Zn(2+). Aspartate 82 is a catalytic residue. Position 112 (aspartate 112) interacts with Zn(2+). Residue glutamate 144 is part of the active site. The Zn(2+) site is built by glutamate 145, glutamate 169, and histidine 355.

The protein belongs to the peptidase M20A family. ArgE subfamily. In terms of assembly, homodimer. It depends on Zn(2+) as a cofactor. The cofactor is Co(2+). Glutathione is required as a cofactor.

It localises to the cytoplasm. It catalyses the reaction N(2)-acetyl-L-ornithine + H2O = L-ornithine + acetate. It participates in amino-acid biosynthesis; L-arginine biosynthesis; L-ornithine from N(2)-acetyl-L-ornithine (linear): step 1/1. In terms of biological role, catalyzes the hydrolysis of the amide bond of N(2)-acetylated L-amino acids. Cleaves the acetyl group from N-acetyl-L-ornithine to form L-ornithine, an intermediate in L-arginine biosynthesis pathway, and a branchpoint in the synthesis of polyamines. This Salmonella agona (strain SL483) protein is Acetylornithine deacetylase.